We begin with the raw amino-acid sequence, 885 residues long: DNA mismatch repair protein MutS (885 aa).

626 to 633 (GPNMGGKS) provides a ligand contact to ATP.

Belongs to the DNA mismatch repair MutS family.

In terms of biological role, this protein is involved in the repair of mismatches in DNA. It is possible that it carries out the mismatch recognition step. This protein has a weak ATPase activity. This Burkholderia orbicola (strain MC0-3) protein is DNA mismatch repair protein MutS.